A 523-amino-acid polypeptide reads, in one-letter code: Probable glucose-1-phosphate adenylyltransferase large subunit, chloroplastic (523 aa).

It belongs to the bacterial/plant glucose-1-phosphate adenylyltransferase family. As to quaternary structure, heterotetramer.

The protein localises to the plastid. Its subcellular location is the chloroplast. The catalysed reaction is alpha-D-glucose 1-phosphate + ATP + H(+) = ADP-alpha-D-glucose + diphosphate. Its pathway is glycan biosynthesis; starch biosynthesis. Activated by 3'phosphoglycerate, inhibited by orthophosphate. Allosteric regulation. This protein plays a role in synthesis of starch. It catalyzes the synthesis of the activated glycosyl donor, ADP-glucose from Glc-1-P and ATP. The polypeptide is Probable glucose-1-phosphate adenylyltransferase large subunit, chloroplastic (Arabidopsis thaliana (Mouse-ear cress)).